The chain runs to 599 residues: Sulfite reductase [NADPH] flavoprotein alpha-component (599 aa).

The Flavodoxin-like domain occupies 64-202 (ITLISASQTG…AAAEWRARVV (139 aa)). FMN contacts are provided by residues 70–75 (SQTGNA), 117–120 (STQG), and 153–162 (LGDTSYEFFC). The 215-residue stretch at 234–448 (EAPLTATLSV…IEHNDNFRLP (215 aa)) folds into the FAD-binding FR-type domain. Residues threonine 322, alanine 356, 386–389 (RLYS), 404–406 (TVG), tyrosine 410, and 419–422 (GGAS) contribute to the FAD site. Residues 519–520 (SR), 525–529 (KIYVQ), and aspartate 561 contribute to the NADP(+) site. Position 599 (tyrosine 599) interacts with FAD.

The protein belongs to the NADPH-dependent sulphite reductase flavoprotein subunit CysJ family. In the N-terminal section; belongs to the flavodoxin family. It in the C-terminal section; belongs to the flavoprotein pyridine nucleotide cytochrome reductase family. As to quaternary structure, alpha(8)-beta(8). The alpha component is a flavoprotein, the beta component is a hemoprotein. FAD serves as cofactor. The cofactor is FMN.

It carries out the reaction hydrogen sulfide + 3 NADP(+) + 3 H2O = sulfite + 3 NADPH + 4 H(+). Its pathway is sulfur metabolism; hydrogen sulfide biosynthesis; hydrogen sulfide from sulfite (NADPH route): step 1/1. In terms of biological role, component of the sulfite reductase complex that catalyzes the 6-electron reduction of sulfite to sulfide. This is one of several activities required for the biosynthesis of L-cysteine from sulfate. The flavoprotein component catalyzes the electron flow from NADPH -&gt; FAD -&gt; FMN to the hemoprotein component. The polypeptide is Sulfite reductase [NADPH] flavoprotein alpha-component (Klebsiella pneumoniae subsp. pneumoniae (strain ATCC 700721 / MGH 78578)).